Consider the following 435-residue polypeptide: MSHVHQAGEAFASNAAESRQEIRNYTMNFGPQHPAAHGVLRLILEMDGETIMRADPHVGLLHRGTEKLAESKPFNQSIGYMDRLDYVSMMCNEHAYVRAIETLMGIEAPERAQYIRTMYDEITRILNHLMWLGSNALDLGAMAVMLYAFREREELMDCYEAVSGARMHAAYYRPGGVYRDLPDHMPKYKESRWHKGKALKQLNASREGSLLDFLENFTVEFPKRIDEYETLLTDNRIWKQRTVGIGVVTPELAHQWGMTGVMLRGSGVAWDLRKKRPYAKYDAVDFDIPLGKEGDCYDRYLVRVAEMRESNRIIKQCVAWLKANPGPVMVKNFKVAPPRREDMKDDMEALIHHFKLFSEGYCVPAGETYSAVEAPKGEFGCYLVSDGANKPFRVHLRAPGFAHLSSIDSIVRGHMLADVVAMIGTYDLVFGEVDR.

The protein belongs to the complex I 49 kDa subunit family. NDH-1 is composed of 14 different subunits. Subunits NuoB, C, D, E, F, and G constitute the peripheral sector of the complex.

The protein localises to the cell membrane. The enzyme catalyses a quinone + NADH + 5 H(+)(in) = a quinol + NAD(+) + 4 H(+)(out). Functionally, NDH-1 shuttles electrons from NADH, via FMN and iron-sulfur (Fe-S) centers, to quinones in the respiratory chain. The immediate electron acceptor for the enzyme in this species is believed to be ubiquinone. Couples the redox reaction to proton translocation (for every two electrons transferred, four hydrogen ions are translocated across the cytoplasmic membrane), and thus conserves the redox energy in a proton gradient. The sequence is that of NADH-quinone oxidoreductase subunit D from Stenotrophomonas maltophilia (strain K279a).